Reading from the N-terminus, the 318-residue chain is NAD(P)H-dependent D-xylose reductase (318 aa).

The active-site Proton donor is Y48. Residue H110 coordinates substrate. NAD(+)-binding positions include S165 to N166, S214 to E223, and K270 to N280.

Belongs to the aldo/keto reductase family.

It carries out the reaction xylitol + NAD(+) = D-xylose + NADH + H(+). The enzyme catalyses xylitol + NADP(+) = D-xylose + NADPH + H(+). Its pathway is carbohydrate metabolism; D-xylose degradation. With respect to regulation, NADP(+) is a potent inhibitor of both the NADPH- and NADH-linked xylose reduction, whereas NAD(+) showS strong inhibition only with the NADH-linked reaction. Its function is as follows. Reduces D-xylose into xylitol. Has a preference for NADPH, but can also utilize NADH as cosubstrate. The polypeptide is NAD(P)H-dependent D-xylose reductase (XYL1) (Scheffersomyces stipitis (strain ATCC 58785 / CBS 6054 / NBRC 10063 / NRRL Y-11545) (Yeast)).